The chain runs to 463 residues: Adenosylhomocysteinase (463 aa).

Residues Thr54, Asp128, and Glu189 each coordinate substrate. NAD(+) is bound at residue 190-192 (TTT). The substrate site is built by Lys219 and Asp223. NAD(+) contacts are provided by residues Asn224, 253-258 (GYGDVG), Glu276, Asn311, 332-334 (IGH), and Asn377.

Belongs to the adenosylhomocysteinase family. The cofactor is NAD(+).

Its subcellular location is the cytoplasm. It carries out the reaction S-adenosyl-L-homocysteine + H2O = L-homocysteine + adenosine. The protein operates within amino-acid biosynthesis; L-homocysteine biosynthesis; L-homocysteine from S-adenosyl-L-homocysteine: step 1/1. In terms of biological role, may play a key role in the regulation of the intracellular concentration of adenosylhomocysteine. The polypeptide is Adenosylhomocysteinase (Cereibacter sphaeroides (Rhodobacter sphaeroides)).